Consider the following 326-residue polypeptide: Ribosome biogenesis protein BRX1 homolog (326 aa).

A compositionally biased stretch (basic and acidic residues) spans Met-1–Pro-17. The tract at residues Met-1–Lys-66 is disordered. A compositionally biased stretch (acidic residues) spans Val-22 to Glu-57. The Brix domain occupies Lys-75 to Gly-268.

Belongs to the BRX1 family.

It is found in the nucleus. It localises to the nucleolus. Required for biogenesis of the 60S ribosomal subunit. The protein is Ribosome biogenesis protein BRX1 homolog (bxdc2) of Dictyostelium discoideum (Social amoeba).